Here is a 476-residue protein sequence, read N- to C-terminus: Aspartyl/glutamyl-tRNA(Asn/Gln) amidotransferase subunit B (476 aa).

Belongs to the GatB/GatE family. GatB subfamily. In terms of assembly, heterotrimer of A, B and C subunits.

The catalysed reaction is L-glutamyl-tRNA(Gln) + L-glutamine + ATP + H2O = L-glutaminyl-tRNA(Gln) + L-glutamate + ADP + phosphate + H(+). It catalyses the reaction L-aspartyl-tRNA(Asn) + L-glutamine + ATP + H2O = L-asparaginyl-tRNA(Asn) + L-glutamate + ADP + phosphate + 2 H(+). Functionally, allows the formation of correctly charged Asn-tRNA(Asn) or Gln-tRNA(Gln) through the transamidation of misacylated Asp-tRNA(Asn) or Glu-tRNA(Gln) in organisms which lack either or both of asparaginyl-tRNA or glutaminyl-tRNA synthetases. The reaction takes place in the presence of glutamine and ATP through an activated phospho-Asp-tRNA(Asn) or phospho-Glu-tRNA(Gln). In Moorella thermoacetica (strain ATCC 39073 / JCM 9320), this protein is Aspartyl/glutamyl-tRNA(Asn/Gln) amidotransferase subunit B.